A 1466-amino-acid polypeptide reads, in one-letter code: ABC transporter G family member 10 (1466 aa).

Residues 23–45 (NTPQYENNNNNNNNTSGNESPNI) are compositionally biased toward low complexity. The tract at residues 23 to 47 (NTPQYENNNNNNNNTSGNESPNILN) is disordered. Positions 138-392 (VTIFNLFRPS…FLDLGFDCEP (255 aa)) constitute an ABC transporter 1 domain. The ABC transmembrane type-2 1 domain occupies 497-724 (WGDRFALISK…NGSTMSYQDQ (228 aa)). The next 6 helical transmembrane spans lie at 501–521 (FALI…ASLF), 537–557 (AIYA…GLTF), 586–606 (IPLT…MYGL), 611–631 (GKFF…VAFF), 641–661 (LYVS…YGGY), and 767–787 (IITF…LELF). An ABC transporter 2 domain is found at 838–1082 (FTWNHIHYTV…LTSYFERNGV (245 aa)). Residue 874-881 (GSSGAGKT) coordinates ATP. Residues 1177–1399 (SYVYGIFTQA…LTCKEYFKPT (223 aa)) form the ABC transmembrane type-2 2 domain. The next 6 helical transmembrane spans lie at 1178-1198 (YVYG…FTFW), 1214-1234 (IFEI…QFLI), 1253-1273 (FAIS…TICF), 1290-1310 (FYFY…GQVV), 1319-1339 (LAQT…GVLV), and 1440-1460 (YGIL…FVYL).

This sequence belongs to the ABC transporter superfamily. ABCG family. PDR (TC 3.A.1.205) subfamily.

It localises to the membrane. The protein is ABC transporter G family member 10 (abcG10) of Dictyostelium discoideum (Social amoeba).